Reading from the N-terminus, the 131-residue chain is MAVQKNKKTRRRKEKKNIEHGCAHIKSTFNNSIVTITDVNGNALSWSSAGGLGFKGSRKSTPFAAQMAAETAAKTAMEHGLKSVDVFVKGPGSGREAAIRSLQAAGLEVTLIKDVTPIPHNGCRPPKRRRV.

The protein belongs to the universal ribosomal protein uS11 family. As to quaternary structure, part of the 30S ribosomal subunit. Interacts with proteins S7 and S18. Binds to IF-3.

In terms of biological role, located on the platform of the 30S subunit, it bridges several disparate RNA helices of the 16S rRNA. Forms part of the Shine-Dalgarno cleft in the 70S ribosome. The chain is Small ribosomal subunit protein uS11 from Clostridium acetobutylicum (strain ATCC 824 / DSM 792 / JCM 1419 / IAM 19013 / LMG 5710 / NBRC 13948 / NRRL B-527 / VKM B-1787 / 2291 / W).